We begin with the raw amino-acid sequence, 72 residues long: Galensin (72 aa).

An N-terminal signal peptide occupies residues 1–22; the sequence is MLTLKKSMLLLFFLGLVSVSLA. Positions 23–48 are excised as a propeptide; it reads DDKREDEAEEGEDKRAAEEERNVEKR. Phe-71 bears the Phenylalanine amide mark.

The protein belongs to the frog skin active peptide (FSAP) family. Brevinin subfamily. In terms of assembly, homodimer; disulfide-linked. Expressed by the skin glands.

The protein localises to the secreted. In terms of biological role, antibacterial activity against the Gram-positive bacterium M.luteus and the Gram-negative bacterium E.coli. The protein is Galensin of Kassina senegalensis (Senegal running frog).